Reading from the N-terminus, the 24-residue chain is Brevinin-1Bd (24 aa).

The cysteines at positions 18 and 24 are disulfide-linked.

As to expression, expressed by the skin glands.

The protein localises to the secreted. Functionally, antibacterial activity against Gram-positive bacterium S.aureus and Gram-negative bacterium E.coli. Has activity against C.albicans. This is Brevinin-1Bd from Lithobates berlandieri (Rio Grande leopard frog).